A 120-amino-acid chain; its full sequence is ATP-dependent Clp protease adapter protein ClpS (120 aa).

This sequence belongs to the ClpS family. Binds to the N-terminal domain of the chaperone ClpA.

Functionally, involved in the modulation of the specificity of the ClpAP-mediated ATP-dependent protein degradation. This Pseudomonas savastanoi pv. phaseolicola (strain 1448A / Race 6) (Pseudomonas syringae pv. phaseolicola (strain 1448A / Race 6)) protein is ATP-dependent Clp protease adapter protein ClpS.